The following is a 29-amino-acid chain: Cytochrome b6-f complex subunit 8 (29 aa).

Residues 3 to 23 (TVSIAWAALMVIFTFSISLVV) traverse the membrane as a helical segment.

The protein belongs to the PetN family. The 4 large subunits of the cytochrome b6-f complex are cytochrome b6, subunit IV (17 kDa polypeptide, PetD), cytochrome f and the Rieske protein, while the 4 small subunits are PetG, PetL, PetM and PetN. The complex functions as a dimer.

The protein resides in the plastid. It localises to the chloroplast thylakoid membrane. Its function is as follows. Component of the cytochrome b6-f complex, which mediates electron transfer between photosystem II (PSII) and photosystem I (PSI), cyclic electron flow around PSI, and state transitions. The protein is Cytochrome b6-f complex subunit 8 of Psilotum nudum (Whisk fern).